The primary structure comprises 236 residues: 1-(5-phosphoribosyl)-5-[(5-phosphoribosylamino)methylideneamino] imidazole-4-carboxamide isomerase (236 aa).

Asp-8 acts as the Proton acceptor in catalysis. The Proton donor role is filled by Asp-127.

Belongs to the HisA/HisF family.

It is found in the cytoplasm. It catalyses the reaction 1-(5-phospho-beta-D-ribosyl)-5-[(5-phospho-beta-D-ribosylamino)methylideneamino]imidazole-4-carboxamide = 5-[(5-phospho-1-deoxy-D-ribulos-1-ylimino)methylamino]-1-(5-phospho-beta-D-ribosyl)imidazole-4-carboxamide. Its pathway is amino-acid biosynthesis; L-histidine biosynthesis; L-histidine from 5-phospho-alpha-D-ribose 1-diphosphate: step 4/9. In Campylobacter fetus subsp. fetus (strain 82-40), this protein is 1-(5-phosphoribosyl)-5-[(5-phosphoribosylamino)methylideneamino] imidazole-4-carboxamide isomerase.